Here is a 376-residue protein sequence, read N- to C-terminus: Small ribosomal subunit protein uS11m (376 aa).

It belongs to the universal ribosomal protein uS11 family. Component of the mitochondrial small ribosomal subunit (mt-SSU). Mature N.crassa 74S mitochondrial ribosomes consist of a small (37S) and a large (54S) subunit. The 37S small subunit contains a 16S ribosomal RNA (16S mt-rRNA) and 32 different proteins. The 54S large subunit contains a 23S rRNA (23S mt-rRNA) and 42 different proteins.

Its subcellular location is the mitochondrion. Its function is as follows. Component of the mitochondrial ribosome (mitoribosome), a dedicated translation machinery responsible for the synthesis of mitochondrial genome-encoded proteins, including at least some of the essential transmembrane subunits of the mitochondrial respiratory chain. The mitoribosomes are attached to the mitochondrial inner membrane and translation products are cotranslationally integrated into the membrane. The protein is Small ribosomal subunit protein uS11m (mrps18) of Neurospora crassa (strain ATCC 24698 / 74-OR23-1A / CBS 708.71 / DSM 1257 / FGSC 987).